A 193-amino-acid chain; its full sequence is Ion-translocating oxidoreductase complex subunit A (193 aa).

Transmembrane regions (helical) follow at residues 5–25, 39–59, 72–92, 102–122, 134–154, and 171–191; these read LLLLVGTVLVNNFVLVQFLGL, IGMSFATVFVMTLASLLSYLV, LTTMSFILVIAVVVQFTEMVV, LLGIFLPLITTNCAVLGVALL, IIYGFGAALGFSLVLIMFSAM, and AIAMITAGLMSLAFLGFTGLV.

The protein belongs to the NqrDE/RnfAE family. In terms of assembly, the complex is composed of six subunits: RnfA, RnfB, RnfC, RnfD, RnfE and RnfG.

The protein localises to the cell inner membrane. Its function is as follows. Part of a membrane-bound complex that couples electron transfer with translocation of ions across the membrane. The sequence is that of Ion-translocating oxidoreductase complex subunit A from Colwellia psychrerythraea (strain 34H / ATCC BAA-681) (Vibrio psychroerythus).